The following is a 247-amino-acid chain: Probable transcriptional regulatory protein plu2109 (247 aa).

This sequence belongs to the TACO1 family.

Its subcellular location is the cytoplasm. The protein is Probable transcriptional regulatory protein plu2109 of Photorhabdus laumondii subsp. laumondii (strain DSM 15139 / CIP 105565 / TT01) (Photorhabdus luminescens subsp. laumondii).